Reading from the N-terminus, the 220-residue chain is Glycerol-3-phosphate acyltransferase (220 aa).

The next 6 membrane-spanning stretches (helical) occupy residues 11-31 (INVIFTLLGYLIGGIPFGYAL), 70-90 (LLVLILDLFKGMFAVFLSKLF), 96-116 (LQWMVAIASILGHCYSPFLNF), 127-147 (GSVVLLIPIESLIGLTVWFFV), 153-173 (ISSLASILGVGTATVLIFFVP), and 193-213 (MVLIFIFTLIKHAGNIFNLLA).

Belongs to the PlsY family. In terms of assembly, probably interacts with PlsX.

The protein localises to the cell inner membrane. It carries out the reaction an acyl phosphate + sn-glycerol 3-phosphate = a 1-acyl-sn-glycero-3-phosphate + phosphate. The protein operates within lipid metabolism; phospholipid metabolism. Its function is as follows. Catalyzes the transfer of an acyl group from acyl-phosphate (acyl-PO(4)) to glycerol-3-phosphate (G3P) to form lysophosphatidic acid (LPA). This enzyme utilizes acyl-phosphate as fatty acyl donor, but not acyl-CoA or acyl-ACP. The protein is Glycerol-3-phosphate acyltransferase of Helicobacter pylori (strain ATCC 700392 / 26695) (Campylobacter pylori).